Consider the following 223-residue polypeptide: UPF0441 protein YgiB (223 aa).

Positions 201 to 223 are disordered; the sequence is ESVAKQSTMQRSAAGTSTRSMGG. A compositionally biased stretch (polar residues) spans 204–223; sequence AKQSTMQRSAAGTSTRSMGG.

It belongs to the UPF0441 family.

This is UPF0441 protein YgiB from Salmonella gallinarum (strain 287/91 / NCTC 13346).